A 262-amino-acid chain; its full sequence is MSGRIPNHGYMQPASISATSCGHDYQFPTLANSESDLLEEDAEEFELRPRGKEKTRRSTSKERIDDIVYISRDICEGDTLNSIALQYCCTVADLKRANNFLNEQDFFALRTIKIPVKRFSVLTQPHFSPKAKATRPGTLQLSPEHQESDLLIGPSSYETAGSFLQEVDRDIEKIVKSTDTKKESLNEVVSALSQEHFEPEQILVPQRDPYHGADWSLGWWTAVAIMVFVGIITPLFYFLYYEVLMKVNTSHTLNSIEKSGPS.

Residues 1 to 218 (MSGRIPNHGY…PYHGADWSLG (218 aa)) lie on the Extracellular side of the membrane. The region spanning 70–114 (ISRDICEGDTLNSIALQYCCTVADLKRANNFLNEQDFFALRTIKI) is the LysM domain. The helical transmembrane segment at 219-239 (WWTAVAIMVFVGIITPLFYFL) threads the bilayer. The Cytoplasmic segment spans residues 240–262 (YYEVLMKVNTSHTLNSIEKSGPS).

It localises to the cell membrane. The protein localises to the golgi apparatus. Functionally, essential for Golgi structural integrity. The sequence is that of LysM and putative peptidoglycan-binding domain-containing protein 3 (lysmd3) from Xenopus tropicalis (Western clawed frog).